We begin with the raw amino-acid sequence, 179 residues long: Large ribosomal subunit protein uL6 (179 aa).

This sequence belongs to the universal ribosomal protein uL6 family. Part of the 50S ribosomal subunit.

In terms of biological role, this protein binds to the 23S rRNA, and is important in its secondary structure. It is located near the subunit interface in the base of the L7/L12 stalk, and near the tRNA binding site of the peptidyltransferase center. This Pseudomonas savastanoi pv. phaseolicola (strain 1448A / Race 6) (Pseudomonas syringae pv. phaseolicola (strain 1448A / Race 6)) protein is Large ribosomal subunit protein uL6.